The primary structure comprises 799 residues: Cadherin-8 (799 aa).

Positions 1 to 29 are cleaved as a signal peptide; sequence MPERLAEMLLDLWTPLIILWITLPPCIYM. Residues 30–61 constitute a propeptide that is removed on maturation; that stretch reads APMNQSQVLMSGSPLELNSLGEEQRILNRSKR. 2 N-linked (GlcNAc...) asparagine glycosylation sites follow: N33 and N57. Cadherin domains follow at residues 62 to 167, 168 to 276, 277 to 391, 392 to 494, and 495 to 616; these read GWVW…APEF, LNGP…PPKF, AQSL…PPVF, SSPT…DNAP, and EFAS…YVLP. Residues 62–621 lie on the Extracellular side of the membrane; it reads GWVWNQMFVL…AYVLPIGLSM (560 aa). N-linked (GlcNAc...) asparagine glycosylation is present at N188. Residues N463, N473, and N544 are each glycosylated (N-linked (GlcNAc...) asparagine). Residues 622–642 form a helical membrane-spanning segment; it reads GALIAILACIILLLVIVVLFV. Residues 643 to 799 are Cytoplasmic-facing; the sequence is TLRRHKNEPL…YSVGESDKET (157 aa). S795 carries the phosphoserine modification.

In terms of tissue distribution, mainly expressed in brain. Found in certain nerve cell lines, such as retinoblasts, glioma cells and neuroblasts.

Its subcellular location is the cell membrane. Functionally, cadherins are calcium-dependent cell adhesion proteins. They preferentially interact with themselves in a homophilic manner in connecting cells; cadherins may thus contribute to the sorting of heterogeneous cell types. The chain is Cadherin-8 (CDH8) from Homo sapiens (Human).